The chain runs to 195 residues: 3-isopropylmalate dehydratase small subunit (195 aa).

This sequence belongs to the LeuD family. LeuD type 1 subfamily. In terms of assembly, heterodimer of LeuC and LeuD.

The enzyme catalyses (2R,3S)-3-isopropylmalate = (2S)-2-isopropylmalate. It functions in the pathway amino-acid biosynthesis; L-leucine biosynthesis; L-leucine from 3-methyl-2-oxobutanoate: step 2/4. Functionally, catalyzes the isomerization between 2-isopropylmalate and 3-isopropylmalate, via the formation of 2-isopropylmaleate. The polypeptide is 3-isopropylmalate dehydratase small subunit (Frankia alni (strain DSM 45986 / CECT 9034 / ACN14a)).